Reading from the N-terminus, the 159-residue chain is MIEGILKEGFITTSYDSVMNWAKTGSLWPMSFGLACCAVEMMHAANARYDISRFGAEVFRASPRQSDLIIVAGTLCNKMAPAFRKVYDQMSEPRRVISMGSCANGGGYYHYSYSVVRGCDRIVPVDVYVPGCPPTAEALLYGIIQLQHKIRRTQTIARA.

Positions 36, 37, 102, and 132 each coordinate [4Fe-4S] cluster.

The protein belongs to the complex I 20 kDa subunit family. NDH-1 is composed of 14 different subunits. Subunits NuoB, C, D, E, F, and G constitute the peripheral sector of the complex. Requires [4Fe-4S] cluster as cofactor.

The protein resides in the cell inner membrane. It carries out the reaction a quinone + NADH + 5 H(+)(in) = a quinol + NAD(+) + 4 H(+)(out). NDH-1 shuttles electrons from NADH, via FMN and iron-sulfur (Fe-S) centers, to quinones in the respiratory chain. Couples the redox reaction to proton translocation (for every two electrons transferred, four hydrogen ions are translocated across the cytoplasmic membrane), and thus conserves the redox energy in a proton gradient. The chain is NADH-quinone oxidoreductase subunit B from Albidiferax ferrireducens (strain ATCC BAA-621 / DSM 15236 / T118) (Rhodoferax ferrireducens).